A 313-amino-acid polypeptide reads, in one-letter code: tRNA dimethylallyltransferase (313 aa).

Residue 8–15 participates in ATP binding; it reads GPTGTGKS. Substrate is bound at residue 10–15; sequence TGTGKS.

This sequence belongs to the IPP transferase family. In terms of assembly, monomer. Requires Mg(2+) as cofactor.

The enzyme catalyses adenosine(37) in tRNA + dimethylallyl diphosphate = N(6)-dimethylallyladenosine(37) in tRNA + diphosphate. In terms of biological role, catalyzes the transfer of a dimethylallyl group onto the adenine at position 37 in tRNAs that read codons beginning with uridine, leading to the formation of N6-(dimethylallyl)adenosine (i(6)A). In Mycolicibacterium gilvum (strain PYR-GCK) (Mycobacterium gilvum (strain PYR-GCK)), this protein is tRNA dimethylallyltransferase.